We begin with the raw amino-acid sequence, 461 residues long: Tumor necrosis factor receptor superfamily member 1A (461 aa).

A signal peptide spans 1-29; the sequence is MGLPIVPGLLLSLVLLALLMGIHPSGVTG. The Extracellular portion of the chain corresponds to 30–211; the sequence is LVPSLGDREK…VTNPQDSGTA (182 aa). TNFR-Cys repeat units follow at residues 43-82, 83-125, 126-166, and 167-196; these read LCPQGKYAHPKNNSICCTKCHKGTYLVSDCPSPGQETVCE, VCDK…DTVC, GCKK…NTVC, and NCHAGFFLSGNECTPCSHCKKNQECMKLCL. Disulfide bonds link C44-C58, C59-C72, C62-C81, C84-C99, C102-C117, C105-C125, C127-C143, C146-C158, C149-C166, C168-C179, C182-C195, and C185-C191. N54 is a glycosylation site (N-linked (GlcNAc...) asparagine). Residue N151 is glycosylated (N-linked (GlcNAc...) asparagine). N-linked (GlcNAc...) asparagine glycosylation occurs at N201. Residues 212-234 form a helical membrane-spanning segment; it reads VLLPLVIFLGLCLLFFICISLLC. Over 235 to 461 the chain is Cytoplasmic; that stretch reads RYPQWRPRVY…AHSSTTHLPR (227 aa). An N-SMase activation domain (NSD) region spans residues 344-354; sequence VRKWEDVVAAQ. The region spanning 363–448 is the Death domain; sequence PAMLYAVVDG…GCLENIRETL (86 aa).

As to quaternary structure, binding of TNF to the extracellular domain leads to homotrimerization. The aggregated death domains provide a novel molecular interface that interacts specifically with the death domain of TRADD. Various TRADD-interacting proteins such as TRAFS, RIPK1 and possibly FADD, are recruited to the complex by their association with TRADD. This complex activates at least two distinct signaling cascades, apoptosis and NF-kappa-B signaling. Interacts with BAG4, BABAM2, FEM1B, GRB2, SQSTM1 and TRPC4AP. Interacts with DAB2IP. Interacts directly with NOL3 (via CARD domain); inhibits TNF-signaling pathway. Interacts with SH3RF2, TRADD and RIPK1. SH3RF2 facilitates the recruitment of RIPK1 and TRADD to TNFRSF1A in a TNF-alpha-dependent process. Interacts with PGLYRP1; this interaction is important for cell death induction. Interacts (via death domain) with MADD (via death domain).

It localises to the cell membrane. The protein resides in the golgi apparatus membrane. Functionally, receptor for TNFSF2/TNF-alpha and homotrimeric TNFSF1/lymphotoxin-alpha. The adapter molecule FADD recruits caspase-8 to the activated receptor. The resulting death-inducing signaling complex (DISC) performs caspase-8 proteolytic activation which initiates the subsequent cascade of caspases (aspartate-specific cysteine proteases) mediating apoptosis. The chain is Tumor necrosis factor receptor superfamily member 1A (Tnfrsf1a) from Rattus norvegicus (Rat).